Consider the following 258-residue polypeptide: UPF0246 protein LHK_02295 (258 aa).

This sequence belongs to the UPF0246 family.

The polypeptide is UPF0246 protein LHK_02295 (Laribacter hongkongensis (strain HLHK9)).